The following is a 235-amino-acid chain: Secreted RxLR effector protein 27 (235 aa).

An N-terminal signal peptide occupies residues 1–25 (MTNLFTRHTRRSLTALALLSGGVYA). The RxLR-dEER signature appears at 36–60 (RSLRVFVTGGQVLWDYRIHFKGIER).

This sequence belongs to the RxLR effector family.

It is found in the secreted. Its subcellular location is the host cytoplasm. The protein resides in the host nucleus. Functionally, effector that acts as a broad suppressor of cell death to interrupt plant immunity. Inhibits cell death induced by cell death-inducing proteins, including the PAMP elicitor INF1 from P.infestans. The sequence is that of Secreted RxLR effector protein 27 from Plasmopara viticola (Downy mildew of grapevine).